A 640-amino-acid chain; its full sequence is MNGPPTFTQYRINKFSGNGATHKIRELLNFNDEKKWKQFSSRRLELIDKFQLSQYKASEQDQNIKQIATILRTEFGYPVSCSKEFEKLVTAAVQSVRRNRKRSKKRYALSIANGSGGNVNNSISSNSTSDDEISPSIYQRSNSDFLPSSNYAADFQFSNKFQPLMSHQSHNGTIFPTVGTQNDSSPSVTSTQQKYNDIVTMLVHDLVTNVVPLSEQALKDPYTGPNLSHFATSSLSQQPNITTNIPIDSTVPFFLREKLLLQIQRSRTCQDISQAAGSIDIYANLEILGEMSIRMSIAFVIERFFSNLVSSSMKYITAKTCSPENLALLSQRLFGAATRHNLSHFPAAQVQLRLLYLVIGGIVKDFGFDPTLYPLSEIIHHIVMVQYPLASSCASEPPSSSPNKRVKRSPPVVSSDVMLNNNNTLSNRATLLTTLPMKPQSANKDVNRRVIIRFNDREQAFTFHQLSNGPPTVSEVLENCKNLFNIINKNKNFGIFHNDNLLNDESLAKLFDSFSTSEIHLVIKDISTIPLQDAKIPVPITLPKMSCIGENPSMPSIPLVPQEKDDPKKSSLTAFDNILNRISKSPMNEENSNTTLNTGTSTSNTNNNDHNESVPAPYVTKNKNSFQNGNLPQPVFQPLL.

Over residues 118–128 the composition is skewed to low complexity; it reads NVNNSISSNST. Residues 118-139 form a disordered region; sequence NVNNSISSNSTSDDEISPSIYQ. Position 409 is a phosphoserine (Ser409). Residues 580–640 are disordered; sequence NRISKSPMNE…LPQPVFQPLL (61 aa). Residues 588-608 show a composition bias toward low complexity; the sequence is NEENSNTTLNTGTSTSNTNNN. Residues 621–631 show a composition bias toward polar residues; sequence KNKNSFQNGNL.

Belongs to the VHR1 family.

Its subcellular location is the cytoplasm. It is found in the nucleus. Transcription factor that binds to the VHRE consensus sequence in promoters of VHT1 and BIO5, and regulates their biotin-dependent expression. This chain is Transcription factor VHR1 (VHR1), found in Saccharomyces cerevisiae (strain ATCC 204508 / S288c) (Baker's yeast).